The following is a 187-amino-acid chain: Putative protein 2 (187 aa).

2 helical membrane-spanning segments follow: residues 10 to 27 and 99 to 121; these read MLAA…NVGV and VTII…LLLV.

The protein belongs to the TMEM9 family.

Its subcellular location is the membrane. The protein is Putative protein 2 of Takifugu rubripes (Japanese pufferfish).